Reading from the N-terminus, the 115-residue chain is Aspartate 1-decarboxylase (115 aa).

The active-site Schiff-base intermediate with substrate; via pyruvic acid is Ser25. Pyruvic acid (Ser) is present on Ser25. Thr57 serves as a coordination point for substrate. Residue Tyr58 is the Proton donor of the active site. 71–73 lines the substrate pocket; that stretch reads GAA.

It belongs to the PanD family. Heterooctamer of four alpha and four beta subunits. The cofactor is pyruvate. Post-translationally, is synthesized initially as an inactive proenzyme, which is activated by self-cleavage at a specific serine bond to produce a beta-subunit with a hydroxyl group at its C-terminus and an alpha-subunit with a pyruvoyl group at its N-terminus.

It localises to the cytoplasm. The catalysed reaction is L-aspartate + H(+) = beta-alanine + CO2. It functions in the pathway cofactor biosynthesis; (R)-pantothenate biosynthesis; beta-alanine from L-aspartate: step 1/1. Its function is as follows. Catalyzes the pyruvoyl-dependent decarboxylation of aspartate to produce beta-alanine. The sequence is that of Aspartate 1-decarboxylase from Campylobacter concisus (strain 13826).